A 376-amino-acid chain; its full sequence is Erythronate-4-phosphate dehydrogenase (376 aa).

Residues S45 and T66 each coordinate substrate. Residues 126–127 (QV), D146, T174, 201–203 (ASR), and D227 each bind NAD(+). The active site involves R203. Residue E232 is part of the active site. H249 (proton donor) is an active-site residue. G252 provides a ligand contact to NAD(+). A substrate-binding site is contributed by Y253.

Belongs to the D-isomer specific 2-hydroxyacid dehydrogenase family. PdxB subfamily. Homodimer.

It localises to the cytoplasm. The catalysed reaction is 4-phospho-D-erythronate + NAD(+) = (R)-3-hydroxy-2-oxo-4-phosphooxybutanoate + NADH + H(+). It participates in cofactor biosynthesis; pyridoxine 5'-phosphate biosynthesis; pyridoxine 5'-phosphate from D-erythrose 4-phosphate: step 2/5. Its function is as follows. Catalyzes the oxidation of erythronate-4-phosphate to 3-hydroxy-2-oxo-4-phosphonooxybutanoate. The chain is Erythronate-4-phosphate dehydrogenase from Ectopseudomonas mendocina (strain ymp) (Pseudomonas mendocina).